Consider the following 598-residue polypeptide: Elongation factor 4 (598 aa).

The region spanning 2-184 (TKIRNFSIIA…AVVDRIPPPS (183 aa)) is the tr-type G domain. GTP-binding positions include 14–19 (DHGKST) and 131–134 (NKID).

This sequence belongs to the TRAFAC class translation factor GTPase superfamily. Classic translation factor GTPase family. LepA subfamily.

The protein localises to the cell inner membrane. It carries out the reaction GTP + H2O = GDP + phosphate + H(+). Functionally, required for accurate and efficient protein synthesis under certain stress conditions. May act as a fidelity factor of the translation reaction, by catalyzing a one-codon backward translocation of tRNAs on improperly translocated ribosomes. Back-translocation proceeds from a post-translocation (POST) complex to a pre-translocation (PRE) complex, thus giving elongation factor G a second chance to translocate the tRNAs correctly. Binds to ribosomes in a GTP-dependent manner. In Syntrophobacter fumaroxidans (strain DSM 10017 / MPOB), this protein is Elongation factor 4.